The chain runs to 669 residues: Acetyl-coenzyme A synthetase (669 aa).

Residues 211 to 214 (RGGK) and T329 each bind CoA. Residues 404–406 (GEP), 428–433 (DTYWQT), D519, and R534 contribute to the ATP site. CoA is bound at residue S542. Position 545 (R545) interacts with ATP. R602 contacts CoA.

The protein belongs to the ATP-dependent AMP-binding enzyme family.

It carries out the reaction acetate + ATP + CoA = acetyl-CoA + AMP + diphosphate. The protein operates within ketone degradation; acetoin degradation. It participates in antibiotic biosynthesis; penicillin biosynthesis. The protein is Acetyl-coenzyme A synthetase (facA) of Penicillium chrysogenum (Penicillium notatum).